Consider the following 1358-residue polypeptide: Tenascin-R (1358 aa).

The signal sequence occupies residues M1–C31. O-linked (GalNAc...) threonine glycans are attached at residues T36 and T37. N55 carries N-linked (GlcNAc...) asparagine glycosylation. Residues C127–A157 adopt a coiled-coil conformation. A glycan (O-linked (Xyl...) (chondroitin sulfate) serine) is linked at S176. 2 N-linked (GlcNAc...) asparagine glycosylation sites follow: N180 and N198. EGF-like domains are found at residues C188–C199, C219–C230, and C250–C261. S271 is a glycosylation site (O-linked (Xyl...) (chondroitin sulfate) serine). The N-linked (GlcNAc...) asparagine glycan is linked to N278. Residues C281–C292 form the EGF-like 4 domain. 3 cysteine pairs are disulfide-bonded: C292/C301, C297/C312, and C314/C323. S302 carries O-linked (Xyl...) (chondroitin sulfate) serine glycosylation. Residues C312–C323 enclose the EGF-like 5 domain. Fibronectin type-III domains are found at residues P328–G420, L421–D505, G506–D595, A596–D687, S688–I777, S778–D865, P866–N955, P956–D1042, and P1043–R1130. N-linked (GlcNAc...) asparagine glycosylation is found at N392, N470, and N581. Phosphoserine is present on S724. N-linked (GlcNAc...) asparagine glycans are attached at residues N791, N874, N1036, N1046, and N1261. In terms of domain architecture, Fibrinogen C-terminal spans G1129–N1344.

The protein belongs to the tenascin family. Forms oligomers. Interacts with CNTN1, TNC, and FN1. Interacts with BCAN and ACAN in a calcium-dependent manner. Interacts with SCN2B, PTPRZ1, and CSPG3. Contains N-linked oligosaccharides, O-linked sialylated structures and O-linked chondroitin sulfate glycosaminoglycans. Contains N-linked oligosaccharides with a sulfated carbohydrate structure. O-glycosylated on Thr-36 or Thr-37 with a core 1 or possibly core 8 glycan. Brain specific.

The protein resides in the secreted. It localises to the extracellular space. It is found in the extracellular matrix. Neural extracellular matrix (ECM) protein involved in interactions with different cells and matrix components. These interactions can influence cellular behavior by either evoking a stable adhesion and differentiation, or repulsion and inhibition of neurite growth. Binding to cell surface gangliosides inhibits RGD-dependent integrin-mediated cell adhesion and results in an inhibition of PTK2/FAK1 (FAK) phosphorylation and cell detachment. Binding to membrane surface sulfatides results in a oligodendrocyte adhesion and differentiation. Interaction with CNTN1 induces a repulsion of neurons and an inhibition of neurite outgrowth. Interacts with SCN2B may play a crucial role in clustering and regulation of activity of sodium channels at nodes of Ranvier. TNR-linked chondroitin sulfate glycosaminoglycans are involved in the interaction with FN1 and mediate inhibition of cell adhesion and neurite outgrowth. The highly regulated addition of sulfated carbohydrate structure may modulate the adhesive properties of TNR over the course of development and during synapse maintenance. The polypeptide is Tenascin-R (TNR) (Homo sapiens (Human)).